The following is a 229-amino-acid chain: Thylakoid lumenal 19 kDa protein, chloroplastic (229 aa).

It localises to the plastid. Its subcellular location is the chloroplast thylakoid lumen. In Arabidopsis thaliana (Mouse-ear cress), this protein is Thylakoid lumenal 19 kDa protein, chloroplastic.